A 431-amino-acid polypeptide reads, in one-letter code: Adenylosuccinate synthetase (431 aa).

GTP-binding positions include 13 to 19 (GDEGKGK) and 41 to 43 (GHT). Residue Asp-14 is the Proton acceptor of the active site. Residues Asp-14 and Gly-41 each coordinate Mg(2+). IMP is bound by residues 14 to 17 (DEGK), 39 to 42 (NAGH), Thr-130, Arg-144, Gln-225, Thr-240, and Arg-304. His-42 acts as the Proton donor in catalysis. Substrate is bound at residue 300–306 (TTTGRSR). GTP-binding positions include Arg-306, 332 to 334 (KLD), and 414 to 416 (STG).

This sequence belongs to the adenylosuccinate synthetase family. In terms of assembly, homodimer. Mg(2+) serves as cofactor.

It is found in the cytoplasm. The catalysed reaction is IMP + L-aspartate + GTP = N(6)-(1,2-dicarboxyethyl)-AMP + GDP + phosphate + 2 H(+). It functions in the pathway purine metabolism; AMP biosynthesis via de novo pathway; AMP from IMP: step 1/2. Functionally, plays an important role in the de novo pathway of purine nucleotide biosynthesis. Catalyzes the first committed step in the biosynthesis of AMP from IMP. In Marinobacter nauticus (strain ATCC 700491 / DSM 11845 / VT8) (Marinobacter aquaeolei), this protein is Adenylosuccinate synthetase.